A 407-amino-acid polypeptide reads, in one-letter code: uncharacterized protein (407 aa).

The first 27 residues, 1 to 27 (MRILAMTRAHNAGRTLAATLDSLAVFS), serve as a signal peptide directing secretion.

This is an uncharacterized protein from Mycobacterium bovis (strain ATCC BAA-935 / AF2122/97).